The primary structure comprises 621 residues: MDGNVFPDQEQLLAFLKKLKEVFDVCDEDADGYIRVEHFVDLGLQFGQGDEVKKFAKYLDPNAHGRINFKDFCHGVFAIKGCEEILKSALGTPTIAAQPYQTDNGYYYQHQEGSLGPPIIVCTRPYPECQLYSDEEGMGGRDMQESDMDSAADSGAGSESSEGGRQDDKEEGLGGFFLRGNNCGQMVSSAAASVISVEEQFEDYGEGEDVDFTPSSPIPDDDTRTNGFSDLGSSLPSSAGQTPQKIRHLYNSELLDVYCSQCCKKVNLLNDLEARLKNLKANSPNRKISSTAFGRQLFHHSNFSSSQGSTEDLFRDSIDSCDVDITEKVSYLEKKISELENDSLANGDLKSKLKQENTQLVHRVHELEEQIKDQETRAEQCLEEELKRHREAYSKMERDKSTEIELLSNRVQQLEEENAEMKVNVCRLKSQTEKLDQEKQRMTDKLEDTSLRLKDEMDLYRKMMDKLWQNRHEFQKEREAMQELIEDLRRELEHLQLFKLETEKPGRGRTAAGLSEYNAKTREIELEHEVKRLKQENHKLRDQNDDLNGQILSLSLYEAKNLFACHTKAQSLAAEIDNASRDELVDALKEQEEINFRLRQYMDKIILAILDHNPSILEIKH.

EF-hand domains follow at residues 14–49 (AFLK…FGQG) and 47–82 (GQGD…IKGC). Positions 27, 29, 31, 33, 38, 60, 62, 66, and 71 each coordinate Ca(2+). 2 disordered regions span residues 132-172 (YSDE…KEEG) and 203-243 (DYGE…GQTP). The span at 151–161 (AADSGAGSESS) shows a compositional bias: low complexity. Basic and acidic residues predominate over residues 162–172 (EGGRQDDKEEG). The segment covering 225–243 (TNGFSDLGSSLPSSAGQTP) has biased composition (polar residues). Positions 348 to 556 (DLKSKLKQEN…LNGQILSLSL (209 aa)) form a coiled coil. One can recognise an FIP-RBD domain in the interval 558–620 (EAKNLFACHT…DHNPSILEIK (63 aa)).

Homodimer. Forms a complex with Rab11 (rab11a or rab11b) and arf6. Isoform 1 is predominantly expressed in neural tissues. Isoform B is expressed ubiquitously. In the developing retina, it is expressed in progenitors throughout the retina at early stages and becomes restricted to the ganglion cell layer and ciliary marginal zone as differentiation proceeds.

It localises to the recycling endosome membrane. Its subcellular location is the cleavage furrow. It is found in the midbody. The protein resides in the cytoplasmic vesicle. Acts as a regulator of endocytic traffic by participating in membrane delivery. Required for the abscission step in cytokinesis, possibly by acting as an 'address tag' delivering recycling endosome membranes to the cleavage furrow during late cytokinesis. May play a role in differentiation during retinal development. The polypeptide is Rab11 family-interacting protein 4A (rab11fip4a) (Danio rerio (Zebrafish)).